A 318-amino-acid chain; its full sequence is Ribosomal RNA small subunit methyltransferase A (318 aa).

The S-adenosyl-L-methionine site is built by asparagine 40, valine 42, glycine 67, glutamate 88, aspartate 118, and asparagine 137. Over residues 295-305 the composition is skewed to basic and acidic residues; it reads SADRGGTDREG. Residues 295–318 are disordered; sequence SADRGGTDREGTSPPTAGQGAPAR.

This sequence belongs to the class I-like SAM-binding methyltransferase superfamily. rRNA adenine N(6)-methyltransferase family. RsmA subfamily.

It is found in the cytoplasm. The enzyme catalyses adenosine(1518)/adenosine(1519) in 16S rRNA + 4 S-adenosyl-L-methionine = N(6)-dimethyladenosine(1518)/N(6)-dimethyladenosine(1519) in 16S rRNA + 4 S-adenosyl-L-homocysteine + 4 H(+). In terms of biological role, specifically dimethylates two adjacent adenosines (A1518 and A1519) in the loop of a conserved hairpin near the 3'-end of 16S rRNA in the 30S particle. May play a critical role in biogenesis of 30S subunits. This Mycolicibacterium paratuberculosis (strain ATCC BAA-968 / K-10) (Mycobacterium paratuberculosis) protein is Ribosomal RNA small subunit methyltransferase A.